Here is a 607-residue protein sequence, read N- to C-terminus: UvrABC system protein C (607 aa).

One can recognise a GIY-YIG domain in the interval 16 to 94 (GRPGVYRMFD…IKEWRPPYNI (79 aa)). One can recognise a UVR domain in the interval 203-238 (QQLGNELNAEMEKAAMALDFEKAAELRDQIALLRRV).

It belongs to the UvrC family. Interacts with UvrB in an incision complex.

It localises to the cytoplasm. The UvrABC repair system catalyzes the recognition and processing of DNA lesions. UvrC both incises the 5' and 3' sides of the lesion. The N-terminal half is responsible for the 3' incision and the C-terminal half is responsible for the 5' incision. This is UvrABC system protein C from Pseudomonas putida (strain ATCC 700007 / DSM 6899 / JCM 31910 / BCRC 17059 / LMG 24140 / F1).